The following is a 182-amino-acid chain: Ribosome maturation factor RimM (182 aa).

Positions 103–182 (EGDYYWKDLM…TIEVDWDPGF (80 aa)) constitute a PRC barrel domain.

Belongs to the RimM family. As to quaternary structure, binds ribosomal protein uS19.

It is found in the cytoplasm. Functionally, an accessory protein needed during the final step in the assembly of 30S ribosomal subunit, possibly for assembly of the head region. Essential for efficient processing of 16S rRNA. May be needed both before and after RbfA during the maturation of 16S rRNA. It has affinity for free ribosomal 30S subunits but not for 70S ribosomes. In Klebsiella pneumoniae subsp. pneumoniae (strain ATCC 700721 / MGH 78578), this protein is Ribosome maturation factor RimM.